An 878-amino-acid polypeptide reads, in one-letter code: MSHPTSTPAFTVADIRKSFLDFFASKGHTVVPSSSLVPGNDPTLMFTNSGMVQFKDVFLGTDKRSYVRAASVQACLRAGGKHNDLENVGYTARHHTFFEMLGNWSFGDYFKRESLKWAWELLTDVYKLPADKLWATVYIDDDEAYDIWTKEIGLPPERVVRIGDNKGAKYASDNFWMMADTGPCGPCSEIFYDHGPEIAGGPPGSPEQDGDRYIEIWNNVFMQFDMQPDGSVKPLPAPCVDTGMGLERLAAILQHVHSNYEIDVFDALIKAAARETGEKDLNNKSLRVIADHIRATAFLVSDGVNPSNEGRGYVQRRIIRRAIRHGYKLGKKTPFFHKLVADLARLMGDAYPKLRTDEARITAVLKAEEERFFETLEIGMTILDTALAGGAKVLPGDVAFKLHDTYGFPLDLSADVCRERGVDVDETGFNAAMDRQKNQARAAGKFKMDRALEYAGSGNTFTGYERLEETAKIVALYADGVPVAALTKGQSGVVVLDTTPFYAESGGQVGDEGELISGSAHFAVGDTLKIKSDVYGHHGTVEQGTLNVGDHVNARVNLAVRAATVRNHSATHLMHKALREVLGEHVQQKGSLVNAERTRFDFAHNAPVTDDQIREIEARVNAEILSNVATDASVMDMEAAQKTGAMMLFGEKYGDKVRVLSIGSSKELCGGTHVTRTGDIGLFKIVAESGVAAGVRRVEAVTGENALAYLQSLESTVQAAAGSLKASPTELQQRIGQVLDQVKSLEKEIAALKGKLASSQGDELMAQAFDVKGLKVLAARLEGADARTLRETMDKLKDKLKTGVFVLAAVDGNKVQIAAGVTADSVTVVKAGELVNFVAQQVGGKGGGKADMAMAGGTDASRLDDALKSVRAWVTERA.

The Zn(2+) site is built by His-568, His-572, Cys-669, and His-673.

This sequence belongs to the class-II aminoacyl-tRNA synthetase family. It depends on Zn(2+) as a cofactor.

It is found in the cytoplasm. The enzyme catalyses tRNA(Ala) + L-alanine + ATP = L-alanyl-tRNA(Ala) + AMP + diphosphate. Functionally, catalyzes the attachment of alanine to tRNA(Ala) in a two-step reaction: alanine is first activated by ATP to form Ala-AMP and then transferred to the acceptor end of tRNA(Ala). Also edits incorrectly charged Ser-tRNA(Ala) and Gly-tRNA(Ala) via its editing domain. The sequence is that of Alanine--tRNA ligase from Polaromonas sp. (strain JS666 / ATCC BAA-500).